Reading from the N-terminus, the 146-residue chain is Large ribosomal subunit protein bL17 (146 aa).

The segment at Arg118–Ala146 is disordered. The span at Ala134–Ala146 shows a compositional bias: acidic residues.

This sequence belongs to the bacterial ribosomal protein bL17 family. In terms of assembly, part of the 50S ribosomal subunit. Contacts protein L32.

The chain is Large ribosomal subunit protein bL17 from Acidiphilium cryptum (strain JF-5).